A 132-amino-acid polypeptide reads, in one-letter code: Holo-[acyl-carrier-protein] synthase (132 aa).

2 residues coordinate Mg(2+): Asp-8 and Glu-62.

It belongs to the P-Pant transferase superfamily. AcpS family. Mg(2+) is required as a cofactor.

Its subcellular location is the cytoplasm. The catalysed reaction is apo-[ACP] + CoA = holo-[ACP] + adenosine 3',5'-bisphosphate + H(+). Transfers the 4'-phosphopantetheine moiety from coenzyme A to a Ser of acyl-carrier-protein. This is Holo-[acyl-carrier-protein] synthase from Leptothrix cholodnii (strain ATCC 51168 / LMG 8142 / SP-6) (Leptothrix discophora (strain SP-6)).